Consider the following 554-residue polypeptide: Thermosome subunit alpha (554 aa).

A disordered region spans residues 530–554 (PKKKEKKGKTGEEEEEEGGGSKFEF).

It belongs to the TCP-1 chaperonin family. Forms a Heterooligomeric complex of two stacked eight-membered rings.

Its function is as follows. Molecular chaperone; binds unfolded polypeptides in vitro, and has a weak ATPase activity. This is Thermosome subunit alpha (thsA) from Aeropyrum pernix (strain ATCC 700893 / DSM 11879 / JCM 9820 / NBRC 100138 / K1).